The chain runs to 251 residues: MTLAVRVIPCLDVDNGRVVKGVNFQNLRDAGDPVEMAKVYDAEGADELTFLDITASSGNRETTYDVVRRTAEQVFIPLTVGGGVRTAEDVDKLLRAGADKVGVNTAAIARPDLIREIAERFGRQVLVLSVDARRTEAGTFEVTTHGGRRGTGIDAVEWAHRAAELGAGEILLNSMDADGTKDGYDLEMLAAVRKHVSVPVIASGGAGSLAHFAPAVEAGADAVLAASVFHFGDLRIGEVKTTLREAGHPVR.

Catalysis depends on residues D12 and D131.

This sequence belongs to the HisA/HisF family. Heterodimer of HisH and HisF.

The protein resides in the cytoplasm. The enzyme catalyses 5-[(5-phospho-1-deoxy-D-ribulos-1-ylimino)methylamino]-1-(5-phospho-beta-D-ribosyl)imidazole-4-carboxamide + L-glutamine = D-erythro-1-(imidazol-4-yl)glycerol 3-phosphate + 5-amino-1-(5-phospho-beta-D-ribosyl)imidazole-4-carboxamide + L-glutamate + H(+). Its pathway is amino-acid biosynthesis; L-histidine biosynthesis; L-histidine from 5-phospho-alpha-D-ribose 1-diphosphate: step 5/9. IGPS catalyzes the conversion of PRFAR and glutamine to IGP, AICAR and glutamate. The HisF subunit catalyzes the cyclization activity that produces IGP and AICAR from PRFAR using the ammonia provided by the HisH subunit. This is Imidazole glycerol phosphate synthase subunit HisF (hisF) from Streptomyces coelicolor (strain ATCC BAA-471 / A3(2) / M145).